We begin with the raw amino-acid sequence, 542 residues long: Membrane protein insertase YidC (542 aa).

The helical transmembrane segment at 5–25 (TLLAVILSITVFYVFSLLFAP) threads the bilayer. Positions 33–64 (ESTGQAVSAPVSAGQPVAGGVQPSASAPSLPA) are disordered. Residues 54 to 64 (QPSASAPSLPA) are compositionally biased toward low complexity. Helical transmembrane passes span 323–343 (LDLG…KYFY), 345–365 (YVGN…ALFF), 419–439 (LPML…MFSI), 463–483 (MLGL…TMFI), and 500–520 (MLAL…GLVL).

Belongs to the OXA1/ALB3/YidC family. Type 1 subfamily. Interacts with the Sec translocase complex via SecD. Specifically interacts with transmembrane segments of nascent integral membrane proteins during membrane integration.

It localises to the cell inner membrane. In terms of biological role, required for the insertion and/or proper folding and/or complex formation of integral membrane proteins into the membrane. Involved in integration of membrane proteins that insert both dependently and independently of the Sec translocase complex, as well as at least some lipoproteins. Aids folding of multispanning membrane proteins. The protein is Membrane protein insertase YidC of Pelobacter propionicus (strain DSM 2379 / NBRC 103807 / OttBd1).